We begin with the raw amino-acid sequence, 154 residues long: Isotocin-neurophysin IT 1 (154 aa).

The first 20 residues, 1–20, serve as a signal peptide directing secretion; it reads MSGSMFSVFSLLYLLSVCSA. Cysteines 21 and 26 form a disulfide. The residue at position 29 (Gly29) is a Glycine amide. 7 cysteine pairs are disulfide-bonded: Cys42-Cys86, Cys45-Cys59, Cys53-Cys76, Cys60-Cys66, Cys93-Cys105, Cys99-Cys117, and Cys106-Cys111.

It belongs to the vasopressin/oxytocin family.

Functionally, isotocin causes contraction of smooth muscles. This Catostomus commersonii (White sucker) protein is Isotocin-neurophysin IT 1.